Consider the following 204-residue polypeptide: CASP-like protein 2U2 (204 aa).

Residues 1–36 (MGVLGGDAHVPIGSQVSPGSVVVTNNESFGHRKLLK) lie on the Cytoplasmic side of the membrane. Residues 37–57 (GVDFLVRIKAFAFCLAVIVLL) form a helical membrane-spanning segment. At 58–84 (KNNVQTTVIAPGIVLQAKYNNTKAPVS) the chain is on the extracellular side. N-linked (GlcNAc...) asparagine glycosylation occurs at N77. The chain crosses the membrane as a helical span at residues 85–105 (LLVLASICCGYAFLQAVVSLL). At 106–117 (SFIRDKRVLNNT) the chain is on the cytoplasmic side. A helical membrane pass occupies residues 118-138 (VLAWLTFLLDQVLTYLLLGSA). Over 139–170 (AATAEAAYIAKRGEDKVQWKAVCGPFKRFCDH) the chain is Extracellular. The helical transmembrane segment at 171-191 (FAATVFLSFIAVIAFAVSAAI) threads the bilayer. At 192–204 (SAYYLFRKSKGFK) the chain is on the cytoplasmic side.

The protein belongs to the Casparian strip membrane proteins (CASP) family. Homodimer and heterodimers.

Its subcellular location is the cell membrane. The chain is CASP-like protein 2U2 from Selaginella moellendorffii (Spikemoss).